Reading from the N-terminus, the 313-residue chain is D-alanine--D-alanine ligase (313 aa).

Residues 108–308 (KLVWQQTGVP…YSELVVKVLS (201 aa)) form the ATP-grasp domain. 138-193 (VAKLGLPLFVKPASEGSSVAVLKVKTADALPAALEEAATHDKIVIVEKSIEGGGEY) lines the ATP pocket. Residues Asp-262, Glu-275, and Asn-277 each coordinate Mg(2+).

Belongs to the D-alanine--D-alanine ligase family. It depends on Mg(2+) as a cofactor. The cofactor is Mn(2+).

Its subcellular location is the cytoplasm. It catalyses the reaction 2 D-alanine + ATP = D-alanyl-D-alanine + ADP + phosphate + H(+). It participates in cell wall biogenesis; peptidoglycan biosynthesis. Functionally, cell wall formation. The chain is D-alanine--D-alanine ligase from Burkholderia cenocepacia (strain ATCC BAA-245 / DSM 16553 / LMG 16656 / NCTC 13227 / J2315 / CF5610) (Burkholderia cepacia (strain J2315)).